Reading from the N-terminus, the 269-residue chain is Protein CURLY FLAG LEAF 1 (269 aa).

Residues serine 17–glutamate 44 are disordered. The EAR motif lies at threonine 47–serine 52. The WW domain maps to valine 54–serine 88. 2 disordered regions span residues threonine 83–threonine 133 and glycine 174–glycine 218. Composition is skewed to low complexity over residues arginine 87–arginine 106, alanine 121–threonine 133, and serine 180–serine 202. Over residues threonine 203–glutamate 212 the composition is skewed to polar residues.

In terms of assembly, binds to HDG1.

Functionally, negatively regulates the cuticle development probably by interacting with the HD-ZIP IV transcription factor HDG1. The chain is Protein CURLY FLAG LEAF 1 from Oryza sativa subsp. indica (Rice).